The primary structure comprises 378 residues: Quinolinate synthase (378 aa).

Positions 59 and 80 each coordinate iminosuccinate. Cys-125 is a [4Fe-4S] cluster binding site. Iminosuccinate is bound by residues 151 to 153 (YAN) and Ser-168. Cys-212 lines the [4Fe-4S] cluster pocket. Iminosuccinate contacts are provided by residues 238–240 (HPE) and Thr-255. Cys-309 provides a ligand contact to [4Fe-4S] cluster.

The protein belongs to the quinolinate synthase family. Type 1 subfamily. [4Fe-4S] cluster is required as a cofactor.

The protein localises to the cytoplasm. The enzyme catalyses iminosuccinate + dihydroxyacetone phosphate = quinolinate + phosphate + 2 H2O + H(+). The protein operates within cofactor biosynthesis; NAD(+) biosynthesis; quinolinate from iminoaspartate: step 1/1. Catalyzes the condensation of iminoaspartate with dihydroxyacetone phosphate to form quinolinate. This is Quinolinate synthase from Burkholderia cenocepacia (strain HI2424).